The sequence spans 85 residues: Large ribosomal subunit protein bL27 (85 aa).

The tract at residues 1 to 21 (MAHKKGVGSSKNGRESESKRL) is disordered.

Belongs to the bacterial ribosomal protein bL27 family.

The chain is Large ribosomal subunit protein bL27 from Porphyromonas gingivalis (strain ATCC 33277 / DSM 20709 / CIP 103683 / JCM 12257 / NCTC 11834 / 2561).